A 62-amino-acid polypeptide reads, in one-letter code: Potassium channel toxin alpha-KTx 22.1 (62 aa).

A signal peptide spans 1-18 (MQKLFIVFVLFCILRLDA). 3 cysteine pairs are disulfide-bonded: Cys-28–Cys-46, Cys-33–Cys-59, and Cys-37–Cys-61.

It belongs to the short scorpion toxin superfamily. Potassium channel inhibitor family. Alpha-KTx 22 subfamily. In terms of tissue distribution, expressed by the venom gland.

It is found in the secreted. Functionally, may block potassium channels. This Olivierus martensii (Manchurian scorpion) protein is Potassium channel toxin alpha-KTx 22.1.